Here is a 359-residue protein sequence, read N- to C-terminus: Nicotinate-nucleotide--dimethylbenzimidazole phosphoribosyltransferase (359 aa).

The Proton acceptor role is filled by Glu-318.

This sequence belongs to the CobT family. Homodimer.

It catalyses the reaction 5,6-dimethylbenzimidazole + nicotinate beta-D-ribonucleotide = alpha-ribazole 5'-phosphate + nicotinate + H(+). It participates in nucleoside biosynthesis; alpha-ribazole biosynthesis; alpha-ribazole from 5,6-dimethylbenzimidazole: step 1/2. Catalyzes the synthesis of alpha-ribazole-5'-phosphate from nicotinate mononucleotide (NAMN) and 5,6-dimethylbenzimidazole (DMB). This is Nicotinate-nucleotide--dimethylbenzimidazole phosphoribosyltransferase from Escherichia coli O127:H6 (strain E2348/69 / EPEC).